A 152-amino-acid polypeptide reads, in one-letter code: Cytochrome c oxidase subunit 5A, mitochondrial (152 aa).

Residues 1–43 (MLGTALRRCAVAAAAASRAGPRGLLHPAPAPGPAAAIQSIRCY) constitute a mitochondrion transit peptide. Positions 2-22 (LGTALRRCAVAAAAASRAGPR) match the SIFI-degron motif. An N6-acetyllysine mark is found at K89 and K115. T143 is modified (phosphothreonine).

It belongs to the cytochrome c oxidase subunit 5A family. Component of the cytochrome c oxidase (complex IV, CIV), a multisubunit enzyme composed of 14 subunits. The complex is composed of a catalytic core of 3 subunits MT-CO1, MT-CO2 and MT-CO3, encoded in the mitochondrial DNA, and 11 supernumerary subunits COX4I, COX5A, COX5B, COX6A, COX6B, COX6C, COX7A, COX7B, COX7C, COX8 and NDUFA4, which are encoded in the nuclear genome. The complex exists as a monomer or a dimer and forms supercomplexes (SCs) in the inner mitochondrial membrane with NADH-ubiquinone oxidoreductase (complex I, CI) and ubiquinol-cytochrome c oxidoreductase (cytochrome b-c1 complex, complex III, CIII), resulting in different assemblies (supercomplex SCI(1)III(2)IV(1) and megacomplex MCI(2)III(2)IV(2)). Interacts with AFG1L. Interacts with RAB5IF. In response to mitochondrial stress, the precursor protein is ubiquitinated by the SIFI complex in the cytoplasm before mitochondrial import, leading to its degradation. Within the SIFI complex, UBR4 initiates ubiquitin chain that are further elongated or branched by KCMF1.

It localises to the mitochondrion inner membrane. It participates in energy metabolism; oxidative phosphorylation. Functionally, component of the cytochrome c oxidase, the last enzyme in the mitochondrial electron transport chain which drives oxidative phosphorylation. The respiratory chain contains 3 multisubunit complexes succinate dehydrogenase (complex II, CII), ubiquinol-cytochrome c oxidoreductase (cytochrome b-c1 complex, complex III, CIII) and cytochrome c oxidase (complex IV, CIV), that cooperate to transfer electrons derived from NADH and succinate to molecular oxygen, creating an electrochemical gradient over the inner membrane that drives transmembrane transport and the ATP synthase. Cytochrome c oxidase is the component of the respiratory chain that catalyzes the reduction of oxygen to water. Electrons originating from reduced cytochrome c in the intermembrane space (IMS) are transferred via the dinuclear copper A center (CU(A)) of subunit 2 and heme A of subunit 1 to the active site in subunit 1, a binuclear center (BNC) formed by heme A3 and copper B (CU(B)). The BNC reduces molecular oxygen to 2 water molecules using 4 electrons from cytochrome c in the IMS and 4 protons from the mitochondrial matrix. In Eulemur fulvus fulvus (Brown lemur), this protein is Cytochrome c oxidase subunit 5A, mitochondrial (COX5A).